We begin with the raw amino-acid sequence, 213 residues long: Cytokinin riboside 5'-monophosphate phosphoribohydrolase LOG2 (213 aa).

Substrate contacts are provided by residues Glu-79, 97 to 98, 114 to 120, and Thr-126; these read RK and GYGTFEE.

The protein belongs to the LOG family. As to expression, expressed in roots and shoots. Detected in root hairs.

It localises to the cytoplasm. The protein resides in the nucleus. The catalysed reaction is N(6)-(dimethylallyl)adenosine 5'-phosphate + H2O = N(6)-dimethylallyladenine + D-ribose 5-phosphate. The enzyme catalyses 9-ribosyl-trans-zeatin 5'-phosphate + H2O = trans-zeatin + D-ribose 5-phosphate. Functionally, cytokinin-activating enzyme working in the direct activation pathway. Phosphoribohydrolase that converts inactive cytokinin nucleotides to the biologically active free-base forms. This chain is Cytokinin riboside 5'-monophosphate phosphoribohydrolase LOG2 (LOG2), found in Arabidopsis thaliana (Mouse-ear cress).